The chain runs to 738 residues: Ethylene receptor (738 aa).

The next 3 helical transmembrane spans lie at 23–43 (ISDFFIALAYFSIPLELIYFV), 54–74 (VLVQFGAFIVLCGATHLINLW), and 89–109 (IAKVLTAVVSCATALMLVHII). Cu cation is bound by residues Cys-65 and His-69. The GAF domain occupies 158 to 307 (DRHTILRTTL…VVADQVAVAL (150 aa)). One can recognise a Histidine kinase domain in the interval 350–589 (VMNHEMRTPM…IFIVKLGIPE (240 aa)). The residue at position 353 (His-353) is a Phosphohistidine; by autocatalysis. A Response regulatory domain is found at 615-730 (KVLLMDDNGV…KMRSVLSDLL (116 aa)). Asp-663 is modified (4-aspartylphosphate).

This sequence belongs to the ethylene receptor family. Homodimer; disulfide-linked. The cofactor is Cu cation. Activation probably requires a transfer of a phosphate group between a His in the transmitter domain and an Asp of the receiver domain. As to expression, higher expression in arils than in seeds.

The protein localises to the endoplasmic reticulum membrane. The enzyme catalyses ATP + protein L-histidine = ADP + protein N-phospho-L-histidine.. In terms of biological role, may act early in the ethylene signal transduction pathway, possibly as an ethylene receptor, or as a regulator of the pathway. This chain is Ethylene receptor (ETR1), found in Passiflora edulis (Passion fruit).